The primary structure comprises 451 residues: Phosphoglucosamine mutase (451 aa).

Residue Ser-101 is the Phosphoserine intermediate of the active site. Positions 101, 242, 244, and 246 each coordinate Mg(2+). A Phosphoserine modification is found at Ser-101.

The protein belongs to the phosphohexose mutase family. Requires Mg(2+) as cofactor. In terms of processing, activated by phosphorylation.

The catalysed reaction is alpha-D-glucosamine 1-phosphate = D-glucosamine 6-phosphate. Catalyzes the conversion of glucosamine-6-phosphate to glucosamine-1-phosphate. The polypeptide is Phosphoglucosamine mutase (Beijerinckia indica subsp. indica (strain ATCC 9039 / DSM 1715 / NCIMB 8712)).